A 260-amino-acid chain; its full sequence is Cytosolic Fe-S cluster assembly factor Nubp2 homolog (260 aa).

14–21 (GKGGVGKS) lines the ATP pocket. [4Fe-4S] cluster contacts are provided by Cys-188 and Cys-191.

It belongs to the Mrp/NBP35 ATP-binding proteins family. NUBP2/CFD1 subfamily. As to quaternary structure, heterotetramer of 2 Nubp1 and 2 Nubp2 chains. It depends on [4Fe-4S] cluster as a cofactor.

Its subcellular location is the cytoplasm. Component of the cytosolic iron-sulfur (Fe/S) protein assembly (CIA) machinery. Required for maturation of extramitochondrial Fe-S proteins. The Nubp1-Nubp2 heterotetramer forms a Fe-S scaffold complex, mediating the de novo assembly of an Fe-S cluster and its transfer to target apoproteins. This chain is Cytosolic Fe-S cluster assembly factor Nubp2 homolog, found in Drosophila erecta (Fruit fly).